Here is a 301-residue protein sequence, read N- to C-terminus: Mating type protein mtA-1 (301 aa).

Positions 49-104 (APKKKVNGFMGFRSYYSSLFSQFPQKARSPFMTILWQHDPFHNEWDFMCSVYSSIR) form a DNA-binding region, alpha box.

Belongs to the MATALPHA1 family.

The protein resides in the nucleus. Its function is as follows. Mating type proteins are sequence specific DNA-binding proteins that act as master switches in fungal differentiation by controlling gene expression in a cell type-specific fashion. Transcriptional activator that induces the transcription of alpha-specific genes. The polypeptide is Mating type protein mtA-1 (MTA1) (Sordaria fimicola).